Reading from the N-terminus, the 199-residue chain is Isopentenyl-diphosphate Delta-isomerase (199 aa).

Residues histidine 40 and histidine 47 each coordinate Mn(2+). The Nudix hydrolase domain occupies 45 to 186; that stretch reads PRHLAFSCHV…PALLSPWAVE (142 aa). The active site involves cysteine 82. Cysteine 82 contributes to the Mg(2+) binding site. Mn(2+) is bound at residue histidine 84. Position 102 (glutamate 102) interacts with Mg(2+). 2 residues coordinate Mn(2+): glutamate 131 and glutamate 133. Glutamate 133 is an active-site residue.

The protein belongs to the IPP isomerase type 1 family. The cofactor is Mg(2+). It depends on Mn(2+) as a cofactor.

It is found in the cytoplasm. It carries out the reaction isopentenyl diphosphate = dimethylallyl diphosphate. It functions in the pathway isoprenoid biosynthesis; dimethylallyl diphosphate biosynthesis; dimethylallyl diphosphate from isopentenyl diphosphate: step 1/1. Catalyzes the 1,3-allylic rearrangement of the homoallylic substrate isopentenyl (IPP) to its highly electrophilic allylic isomer, dimethylallyl diphosphate (DMAPP). This Cutibacterium acnes (strain DSM 16379 / KPA171202) (Propionibacterium acnes) protein is Isopentenyl-diphosphate Delta-isomerase.